A 134-amino-acid chain; its full sequence is Holo-[acyl-carrier-protein] synthase (134 aa).

Positions 8 and 56 each coordinate Mg(2+).

Belongs to the P-Pant transferase superfamily. AcpS family. Requires Mg(2+) as cofactor.

The protein localises to the cytoplasm. The enzyme catalyses apo-[ACP] + CoA = holo-[ACP] + adenosine 3',5'-bisphosphate + H(+). Its function is as follows. Transfers the 4'-phosphopantetheine moiety from coenzyme A to a Ser of acyl-carrier-protein. The polypeptide is Holo-[acyl-carrier-protein] synthase (Clostridium kluyveri (strain ATCC 8527 / DSM 555 / NBRC 12016 / NCIMB 10680 / K1)).